Consider the following 181-residue polypeptide: Translation initiation factor IF-3 (181 aa).

Belongs to the IF-3 family. As to quaternary structure, monomer.

The protein localises to the cytoplasm. Its function is as follows. IF-3 binds to the 30S ribosomal subunit and shifts the equilibrium between 70S ribosomes and their 50S and 30S subunits in favor of the free subunits, thus enhancing the availability of 30S subunits on which protein synthesis initiation begins. This Azotobacter vinelandii protein is Translation initiation factor IF-3.